Reading from the N-terminus, the 380-residue chain is Probable inactive dehydrogenase easA (380 aa).

FMN is bound by residues 25 to 27, Ala60, Gln102, and His171; that span reads PMT. The substrate site is built by His171 and Asn174. FMN-binding positions include Lys223, Gly299, 324–325, and Arg325; that span reads GR. Residue Tyr352 participates in substrate binding.

Belongs to the NADH:flavin oxidoreductase/NADH oxidase family.

Probable inactive dehydrogenase; part of the gene cluster that mediates the biosynthesis of fungal ergot alkaloid. DmaW catalyzes the first step of ergot alkaloid biosynthesis by condensing dimethylallyl diphosphate (DMAP) and tryptophan to form 4-dimethylallyl-L-tryptophan. The second step is catalyzed by the methyltransferase easF that methylates 4-dimethylallyl-L-tryptophan in the presence of S-adenosyl-L-methionine, resulting in the formation of 4-dimethylallyl-L-abrine. The catalase easC and the FAD-dependent oxidoreductase easE then transform 4-dimethylallyl-L-abrine to chanoclavine-I which is further oxidized by easD in the presence of NAD(+), resulting in the formation of chanoclavine-I aldehyde. Agroclavine dehydrogenase easG then mediates the conversion of chanoclavine-I aldehyde to agroclavine via a non-enzymatic adduct reaction: the substrate is an iminium intermediate that is formed spontaneously from chanoclavine-I aldehyde in the presence of glutathione. The presence of easA is not required to complete this reaction. Further conversion of agroclavine to paspalic acid is a two-step process involving oxidation of agroclavine to elymoclavine and of elymoclavine to paspalic acid, the second step being performed by the elymoclavine oxidase cloA. Paspalic acid is then further converted to D-lysergic acid. Ergopeptines are assembled from D-lysergic acid and three different amino acids by the D-lysergyl-peptide-synthetases composed each of a monomudular and a trimodular nonribosomal peptide synthetase subunit. LpsB and lpsC encode the monomodular subunits responsible for D-lysergic acid activation and incorporation into the ergopeptine backbone. LpsA1 and A2 subunits encode the trimodular nonribosomal peptide synthetase assembling the tripeptide portion of ergopeptines. LpsA1 is responsible for formation of the major ergopeptine, ergotamine, and lpsA2 for alpha-ergocryptine, the minor ergopeptine of the total alkaloid mixture elaborated by C.purpurea. D-lysergyl-tripeptides are assembled by the nonribosomal peptide synthetases and released as N-(D-lysergyl-aminoacyl)-lactams. Cyclolization of the D-lysergyl-tripeptides is performed by the Fe(2+)/2-ketoglutarate-dependent dioxygenase easH which introduces a hydroxyl group into N-(D-lysergyl-aminoacyl)-lactam at alpha-C of the aminoacyl residue followed by spontaneous condensation with the terminal lactam carbonyl group. The chain is Probable inactive dehydrogenase easA from Claviceps purpurea (strain 20.1) (Ergot fungus).